A 415-amino-acid polypeptide reads, in one-letter code: Zona pellucida-like domain-containing protein 1 (415 aa).

A signal peptide spans 1–19 (MEPIWLLLLLAIFTVSVSA). At 20–372 (QFNGYNCDAN…QQFQINSVTS (353 aa)) the chain is on the extracellular side. The ZP domain maps to 43-320 (YCGVQTITMK…PTCHNRDRRD (278 aa)). 4 disulfides stabilise this stretch: Cys44–Cys155, Cys79–Cys104, Cys235–Cys296, and Cys255–Cys313. A helical membrane pass occupies residues 373 to 393 (ALISGVVILGATSLSFFIIAL). Over 394–415 (TLLNRKKQNSLVLCGIRNPVFN) the chain is Cytoplasmic.

Post-translationally, proteolytically cleaved before the transmembrane segment to yield the secreted form found in the extracellular matrix of the cupula.

It localises to the cytoplasmic vesicle membrane. It is found in the secreted. The protein resides in the extracellular space. The protein localises to the extracellular matrix. In terms of biological role, glycoprotein which is a component of the gelatinous extracellular matrix in the cupulae of the vestibular organ. The protein is Zona pellucida-like domain-containing protein 1 (zpld1) of Xenopus laevis (African clawed frog).